We begin with the raw amino-acid sequence, 95 residues long: Aspartyl/glutamyl-tRNA(Asn/Gln) amidotransferase subunit C (95 aa).

Belongs to the GatC family. In terms of assembly, heterotrimer of A, B and C subunits.

The enzyme catalyses L-glutamyl-tRNA(Gln) + L-glutamine + ATP + H2O = L-glutaminyl-tRNA(Gln) + L-glutamate + ADP + phosphate + H(+). It carries out the reaction L-aspartyl-tRNA(Asn) + L-glutamine + ATP + H2O = L-asparaginyl-tRNA(Asn) + L-glutamate + ADP + phosphate + 2 H(+). Its function is as follows. Allows the formation of correctly charged Asn-tRNA(Asn) or Gln-tRNA(Gln) through the transamidation of misacylated Asp-tRNA(Asn) or Glu-tRNA(Gln) in organisms which lack either or both of asparaginyl-tRNA or glutaminyl-tRNA synthetases. The reaction takes place in the presence of glutamine and ATP through an activated phospho-Asp-tRNA(Asn) or phospho-Glu-tRNA(Gln). The chain is Aspartyl/glutamyl-tRNA(Asn/Gln) amidotransferase subunit C from Methylobacterium nodulans (strain LMG 21967 / CNCM I-2342 / ORS 2060).